A 377-amino-acid chain; its full sequence is Prostaglandin E synthase 2 (377 aa).

Topologically, residues 1–65 (MAAACTRTLG…LAAPVRGSGR (65 aa)) are lumenal. A helical transmembrane segment spans residues 66–83 (VLGCAFLLGGGFGLYQTI). The region spanning 105 to 182 (LKLTLYQYKT…ALKTYISSKD (78 aa)) is the GST N-terminal domain. Residues Val-153 and 166 to 167 (DS) each bind glutathione. A GST C-terminal domain is found at 266-377 (YIVREGKFGS…RMQKATQHVS (112 aa)).

Belongs to the GST superfamily. As to quaternary structure, homodimer.

It localises to the golgi apparatus membrane. It catalyses the reaction prostaglandin H2 = prostaglandin E2. The catalysed reaction is prostaglandin H2 = (12S)-hydroxy-(5Z,8E,10E)-heptadecatrienoate + malonaldehyde. The protein operates within lipid metabolism; prostaglandin biosynthesis. Isomerase activity is increased by sulfhydril compounds. Dithiothreitol (DTT) is most effective, followed by glutathione (GSH) and 2-mercaptoethanol. In terms of biological role, isomerase that catalyzes the conversion of PGH2 into the more stable prostaglandin E2 (PGE2) (in vitro). The biological function and the GSH-dependent property of PTGES2 is still under debate. In vivo, PTGES2 could form a complex with GSH and heme and would not participate in PGE2 synthesis but would catalyze the degradation of prostaglandin E2 H2 (PGH2) to 12(S)-hydroxy-5(Z),8(E),10(E)-heptadecatrienoic acid (HHT) and malondialdehyde (MDA). This Danio rerio (Zebrafish) protein is Prostaglandin E synthase 2 (ptges2).